The primary structure comprises 1651 residues: Alsin (1651 aa).

RCC1 repeat units follow at residues 59–108 (DGEV…AVTE), 109–167 (SGVV…ALSL), and 169–218 (REIW…ALVQ). The segment at 425-462 (ETAAQSGSASTGPESLKDLREEQVKQESLQGKKSSSLM) is disordered. The span at 427–437 (AAQSGSASTGP) shows a compositional bias: polar residues. The segment covering 439–449 (SLKDLREEQVK) has biased composition (basic and acidic residues). A compositionally biased stretch (polar residues) spans 450 to 461 (QESLQGKKSSSL). Residues Ser459, Ser460, Ser477, and Ser486 each carry the phosphoserine modification. Thr504 carries the phosphothreonine modification. RCC1 repeat units lie at residues 519–570 (RTEV…ALTA) and 572–621 (SQVY…FLVD). Lys527 bears the N6-acetyllysine mark. One can recognise a DH domain in the interval 684–879 (GYIASLHELA…ESLALHLGKK (196 aa)). A PH domain is found at 895–1001 (GKMTDSLRKP…RAISQAVDQA (107 aa)). MORN repeat units follow at residues 1043 to 1065 (YDGRWLSGKPHGRGVLKWPDGKM), 1066 to 1088 (YSGMFRNGLEDGYGEYRIPNKAL), 1094 to 1116 (YVGHWKEGKMCGQGVYSYASGEV), 1117 to 1139 (FEGCFQDNMRHGHGLLRSGKLTS), 1145 to 1167 (FIGQWVMDKKAGYGVFDDITRGE), 1169 to 1191 (YMGMWQDDVCQGNGVVVTQFGLY), 1192 to 1214 (YEGNFHLNKMMGNGVLLSEDDTI), and 1215 to 1238 (YEGEFSDDWTLSGKGTLTMPHGDY). Ser1329 carries the phosphoserine modification. Positions 1507-1651 (KQPDIALLGF…YFQIQREKLN (145 aa)) constitute a VPS9 domain.

Forms a heteromeric complex with ALS2CL. Interacts with ALS2CL.

Its function is as follows. May act as a GTPase regulator. Controls survival and growth of spinal motoneurons. The protein is Alsin (Als2) of Mus musculus (Mouse).